Reading from the N-terminus, the 97-residue chain is uncharacterized protein (97 aa).

It to M.thermoautotrophicum MTH1236.

This is an uncharacterized protein from Methanocaldococcus jannaschii (strain ATCC 43067 / DSM 2661 / JAL-1 / JCM 10045 / NBRC 100440) (Methanococcus jannaschii).